Consider the following 427-residue polypeptide: 3-phosphoshikimate 1-carboxyvinyltransferase (427 aa).

3 residues coordinate 3-phosphoshikimate: Lys-20, Ser-21, and Arg-25. Lys-20 lines the phosphoenolpyruvate pocket. 2 residues coordinate phosphoenolpyruvate: Gly-92 and Arg-120. The 3-phosphoshikimate site is built by Ser-166, Gln-168, Asp-312, and Lys-339. Gln-168 is a binding site for phosphoenolpyruvate. Catalysis depends on Asp-312, which acts as the Proton acceptor. Phosphoenolpyruvate is bound by residues Arg-343 and Arg-385.

This sequence belongs to the EPSP synthase family. As to quaternary structure, monomer.

It is found in the cytoplasm. It carries out the reaction 3-phosphoshikimate + phosphoenolpyruvate = 5-O-(1-carboxyvinyl)-3-phosphoshikimate + phosphate. Its pathway is metabolic intermediate biosynthesis; chorismate biosynthesis; chorismate from D-erythrose 4-phosphate and phosphoenolpyruvate: step 6/7. Catalyzes the transfer of the enolpyruvyl moiety of phosphoenolpyruvate (PEP) to the 5-hydroxyl of shikimate-3-phosphate (S3P) to produce enolpyruvyl shikimate-3-phosphate and inorganic phosphate. This Streptococcus pneumoniae (strain Hungary19A-6) protein is 3-phosphoshikimate 1-carboxyvinyltransferase.